The chain runs to 21 residues: S-layer protein 2 (21 aa).

The protein localises to the secreted. It localises to the cell wall. It is found in the S-layer. In terms of biological role, the S-layer is a paracrystalline mono-layered assembly of proteins which coat the surface of bacteria. The polypeptide is S-layer protein 2 (Bacillus thuringiensis subsp. konkukian).